Reading from the N-terminus, the 544-residue chain is MAAKNIKYNEDARKKIHKGVKTLAEAVKVTLGPKGRHVVIDKSFGSPQVTKDGVTVAKEIELEDKHENMGAQMVKEVASKTADKAGDGTTTATVLAEAIYSEGLRNVTAGANPMDLKRGIDKAVKVVVDEIKKISKPVQHHKEIAQVATISANNDAEIGNLIAEAMEKVGKNGSITVEEAKGFETVLDVVEGMNFNRGYLSSYFTTNPETQECVLEESLVLIYDKKISGIKDFLPVLQQVAESGRPLLIIAEDIEGEALATLVVNRLRAGFRVCAVKAPGFGDRRKAMLEDIAILTGGQLISEELGMKLENTTLSMLGKAKKVIVSKEDTTIVEGLGNKEDIEARCENIKKQIEDSTSDYDKEKLQERLAKLSGGVAVIRVGAATEIEMKEKKDRVDDAQHATLAAVEEGILPGGGTALVRCIPTLEAFIPILTNEDEQIGARIVLKALSAPLKQIAANAGKEGAIICQQVLARSSNEGYDALRDAYTDMIEAGILDPTKVTRCALESAASVAGLLLTTEALIADIPEDKSSSAPAMPGAGMDY.

ATP contacts are provided by residues 30–33, K51, 87–91, G415, 481–483, and D497; these read TLGP, DGTTT, and DAL.

This sequence belongs to the chaperonin (HSP60) family. Forms a cylinder of 14 subunits composed of two heptameric rings stacked back-to-back. Interacts with the co-chaperonin GroES.

It is found in the cytoplasm. The catalysed reaction is ATP + H2O + a folded polypeptide = ADP + phosphate + an unfolded polypeptide.. Its function is as follows. Together with its co-chaperonin GroES, plays an essential role in assisting protein folding. The GroEL-GroES system forms a nano-cage that allows encapsulation of the non-native substrate proteins and provides a physical environment optimized to promote and accelerate protein folding. The polypeptide is Chaperonin GroEL (Chlamydia felis (strain Fe/C-56) (Chlamydophila felis)).